We begin with the raw amino-acid sequence, 366 residues long: Latent membrane protein 1 (366 aa).

Residues 1–23 are Cytoplasmic-facing; the sequence is MERDLERGPPGPPRPPLGPPLSS. Residues 24–44 form a helical membrane-spanning segment; that stretch reads SIGLALLLLLLALLFWLYIVL. At 45-51 the chain is on the extracellular side; sequence SNWTGGA. The helical transmembrane segment at 52 to 72 threads the bilayer; the sequence is LLVLYSFALMLIIIILIIFIF. Topologically, residues 73–75 are cytoplasmic; the sequence is RRD. A helical transmembrane segment spans residues 76-96; the sequence is LLCPLGGLGLLLLMVTLLLIA. The Extracellular portion of the chain corresponds to 97–106; the sequence is LWNLHGQALY. The helical transmembrane segment at 107 to 127 threads the bilayer; that stretch reads LGIVLFIFGCLLVLGLWIYFL. Residues 128-139 lie on the Cytoplasmic side of the membrane; sequence EILWRLGATIWQ. Residues 140–160 form a helical membrane-spanning segment; that stretch reads LLAFILAFFLAIILLIIALYL. Residues 161–163 are Extracellular-facing; sequence QQN. Residues 164–184 traverse the membrane as a helical segment; that stretch reads WWTLLVDLLWLLLFMAILIWM. The Cytoplasmic segment spans residues 185–366; that stretch reads YFHGPRHTDE…HGPVQLSYYD (182 aa). The CTAR1 stretch occupies residues 194–232; the sequence is EHHHDDSLPHPQQATDDSSHESDSNSNEGRHHLLVSGAG. A disordered region spans residues 194 to 366; the sequence is EHHHDDSLPH…HGPVQLSYYD (173 aa). Residues 204 to 208 carry the Interaction with host TRAF proteins motif; the sequence is PQQAT. Positions 210-224 are enriched in basic and acidic residues; the sequence is DSSHESDSNSNEGRH. 2 stretches are compositionally biased toward low complexity: residues 251–267 and 337–346; these read NGPQ…PQDP and PHLPTLLLGT. Residues 332–366 are CTAR2; that stretch reads GGGGDPHLPTLLLGTSGSGGDDDDPHGPVQLSYYD.

Belongs to the herpesviridae LMP-1 family. Interacts (via PXQXT motif) with host tumor necrosis factor receptor-associated factor (TRAF) proteins TRAF1, TRAF2, TRAF3 and TRAF5. Interacts with human protein ZMYND11; leading to negatively regulate NF-kappa-B activation. Interacts with host UBE2I; this interaction induces the sumoylation of various cellular proteins. Interacts with host IRF7. Ubiquitinated on the N-terminus.

It localises to the host cell membrane. Its function is as follows. Acts as a CD40 functional homolog to prevent apoptosis of infected B-lymphocytes and drive their proliferation. Functions as a constitutively active tumor necrosis factor receptor that induces the activation of several signaling pathways, including those of the NF-kappa-B family. LMP1 signaling leads to up-regulation of antiapoptotic proteins and provide growth signals in latently infected cells. Interacts with host UBE2I and subsequently affects the sumoylation state of several cellular proteins. For example, induces the sumoylation of host IRF7 thereby limiting its transcriptional activity and modulating the activation of innate immune responses. Also inhibits host IFN-alpha-stimulated STAT2 nuclear translocation and interferon-stimulated response element transcriptional activity by interacting with and inhibiting host TYK2. Induces SUMO expression during viral latency thereby dysregulating the host sumoylation processes. The chain is Latent membrane protein 1 (LMP1) from Homo sapiens (Human).